The following is a 1035-amino-acid chain: MDMDVMMISMCILASTLMAPGWASTSGFLRVPQSQSIVENEAADFGCEATDPASYLHYEWLHNGREISYDKRVYRIGSHLHIEAVQREEDVGDYVCIATSLASGAREASPPAKLSVIYLESASVQLLGSNRNELLLKCHVEGASGDEPLQIEWYRDSARLASWGNVHLEEHRLLVRQPSPSDDGLYRCTASNAAGRVMSKQGYVYQANIKCLPRLLKKNQKLPESWGKQTFLCRGKRGGSGGLDQALSPAPEDLRIVQGPAGQLLIKEGDSAALSCLYELPAELQNQRIQLRWRKDGKLLRHVELGGAIPIPGHAHDSGKDALLREDARLVLHKQNGTLSFASIIASDAGQYQCQLQLEGHAPLNSSPGLLEVIEQLKFVPQPTSKNLELDAAVAKVHCKAQGTPSPQVQWLREGSLNSSLPDQVEVDINGTLIFRNVRAEHRGNYTCQARSSQGQISATVSINVVVTPKFSVPPVGPIETTEQGTVVMHCQAIGDPKPTIQWDKDLKYLSENNTDRERFSFLENGTLEIRNVQVEDEGSYGCTIGNSAGLKREDVQLVVRSTGDGFAPEETGGDGFLVTRAVLITMTVALAYIVLVVGLMLWCRYRRQARKARLNELSIKEAGGDQPDASVTNGKGSEQEPCLSKQRNGASGKPKSKSNGDAQKSDDTACSQQSRSSKKSVYEQLVLPRSGLSELLQIGRGEFGDVFVGKLKASLVAASAQSDKDADTEKQHSNSENGSGGSGSGSGSTTLSTLNEKRRSKTSMDDIEEIKEEEPEQSALEQLVLVKALNKVKDEQACQEFRRQLDLLRGISHKGVVRLFGLCREKDPHYMVLEYTDWGDLKQFLLATAGKVNTATATSSPPALTTSQVLAVAYQIARGMDAIYRSRCTHRDLATRNCVISSEFVVKVSYPALCKDKYSREYHKHRNTLLPVRWLAPECIQEDEYTTKSDIFAYGVLVWELFNQATKLPHEELTSEQVIQRSQAGTLEWTVAEATPDSLKEILLSCWLANPKERPSFSQLGSALSKAMQSVAEK.

Positions 1–23 (MDMDVMMISMCILASTLMAPGWA) are cleaved as a signal peptide. Ig-like C2-type domains lie at 24-109 (STSG…REAS), 110-199 (PPAK…RVMS), 251-365 (PEDL…APLN), 368-464 (PGLL…VSIN), and 469-559 (PKFS…VQLV). Over 24-582 (STSGFLRVPQ…GGDGFLVTRA (559 aa)) the chain is Extracellular. 5 disulfides stabilise this stretch: C47-C96, C138-C188, C276-C354, C399-C448, and C491-C543. Residues N336, N418, N430, N445, N513, and N525 are each glycosylated (N-linked (GlcNAc...) asparagine). A helical transmembrane segment spans residues 583-603 (VLITMTVALAYIVLVVGLMLW). Over 604-1035 (CRYRRQARKA…SKAMQSVAEK (432 aa)) the chain is Cytoplasmic. Disordered regions lie at residues 623–683 (AGGD…KSVY) and 721–775 (AQSD…KEEE). The span at 658–676 (KSNGDAQKSDDTACSQQSR) shows a compositional bias: polar residues. Phosphoserine is present on S681. In terms of domain architecture, Protein kinase; inactive spans 693 to 1029 (LSELLQIGRG…QLGSALSKAM (337 aa)). Positions 723–734 (SDKDADTEKQHS) are enriched in basic and acidic residues. The segment covering 766–775 (DDIEEIKEEE) has biased composition (acidic residues).

This sequence belongs to the protein kinase superfamily. Tyr protein kinase family. Insulin receptor subfamily. Interacts with plexA; component of a receptor complex that mediates the repulsive signaling in response to Semaphorin ligands.

Its subcellular location is the cell membrane. Its function is as follows. Acts as a calcium-dependent, homophilic cell adhesion molecule that regulates neural recognition during the development of the nervous system. Component of the repulsive Plexin signaling response to regulate motor axon guidance at the embryonic stage. Also component of a receptor complex that is required in the adult visual system to innervate the lamina layer; specific targeting of R1-R6 axons. The chain is Tyrosine-protein kinase-like otk from Drosophila persimilis (Fruit fly).